We begin with the raw amino-acid sequence, 42 residues long: Pelovaterin (42 aa).

Intrachain disulfides connect C8–C38, C16–C32, and C24–C39.

The protein resides in the secreted. The protein localises to the extracellular space. Its subcellular location is the extracellular matrix. Functionally, induces the nucleation and stabilization of vaterite, one of the crystalline polymorphs of calcium carbonate. Exhibits strong antimicrobial activity against Pseudomonas aeruginosa and Proteus vulgaris. This Pelodiscus sinensis (Chinese softshell turtle) protein is Pelovaterin.